Here is a 39-residue protein sequence, read N- to C-terminus: Natriuretic peptide TcNPa (39 aa).

The propeptide occupies 1–8 (SGSETAKI). An intrachain disulfide couples Cys12 to Cys28. O-linked (GalNAc...) threonine glycosylation occurs at Thr35.

It belongs to the natriuretic peptide family. In terms of processing, O-linked glycans consist of galactosyl-beta(1-3)-N-acetylgalactosamine (Gal-GalNAc). The synthetic non-glycosylated form shows higher potency on natriuretic receptors (EC(50)=672.90 nM) and NPR2 (EC(50)=261.0 nM). As to expression, expressed by the venom gland.

It is found in the secreted. Snake venom natriuretic peptide that targets both NPR1 (EC(50)=1080.0 nM) and NPR2 (EC(50)=328.60 nM). Exhibits hypotensive and vasodepressor activities. The chain is Natriuretic peptide TcNPa from Tropidechis carinatus (Australian rough-scaled snake).